Here is a 358-residue protein sequence, read N- to C-terminus: Membrane-bound lytic murein transglycosylase C (358 aa).

The first 19 residues, 1 to 19 (MKITLKKLLILAIVPFLYA), serve as a signal peptide directing secretion. A lipid anchor (N-palmitoyl cysteine) is attached at Cys-20. Cys-20 carries S-diacylglycerol cysteine lipidation.

Belongs to the transglycosylase Slt family.

Its subcellular location is the cell outer membrane. It catalyses the reaction Exolytic cleavage of the (1-&gt;4)-beta-glycosidic linkage between N-acetylmuramic acid (MurNAc) and N-acetylglucosamine (GlcNAc) residues in peptidoglycan, from either the reducing or the non-reducing ends of the peptidoglycan chains, with concomitant formation of a 1,6-anhydrobond in the MurNAc residue.. In terms of biological role, murein-degrading enzyme. May play a role in recycling of muropeptides during cell elongation and/or cell division. This is Membrane-bound lytic murein transglycosylase C from Actinobacillus succinogenes (strain ATCC 55618 / DSM 22257 / CCUG 43843 / 130Z).